The chain runs to 639 residues: mRNA export factor (639 aa).

Disordered regions lie at residues 1 to 45 (MQAE…SLES), 63 to 287 (LLGD…KWGA), and 322 to 355 (CTARDPARAHDSGAECPPTEKRDERRTCAPSQPR). Residues 142–152 (PRRRTHARSRS) are compositionally biased toward basic residues. Residues 153–169 (PRAGSTSSQQPPSSSGG) are compositionally biased toward low complexity. Residues 175–189 (VRREAGDRETSEKPA) show a composition bias toward basic and acidic residues. The span at 203–215 (HQCQSPPAQTASQ) shows a compositional bias: polar residues. 2 stretches are compositionally biased toward basic and acidic residues: residues 234 to 247 (RTPHDHQERRHEGA) and 326 to 348 (DPARAHDSGAECPPTEKRDERRT). Zn(2+) is bound by residues Cys-525, His-606, Cys-610, and Cys-615. Residues 525 to 615 (CHLAASKSPL…HANVCRKEEC (91 aa)) form a CHC2-type zinc finger.

Belongs to the HHV-1 ICP27 protein family.

Its subcellular location is the host cytoplasm. The protein localises to the host nucleus. Functionally, multifunctional regulator of the expression of viral genes that mediates nuclear export of viral intronless mRNAs. This immediate early (EI) protein promotes the nuclear export of viral intronless mRNAs. This is mRNA export factor from Amazona oratrix (yellow-headed parrot).